A 363-amino-acid polypeptide reads, in one-letter code: Peptide chain release factor 1 (363 aa).

Gln-237 is subject to N5-methylglutamine. Residues 281–302 (QQAEDEKSHAEEQTIRRSLVAS) form a disordered region. Basic and acidic residues predominate over residues 282–295 (QAEDEKSHAEEQTI).

This sequence belongs to the prokaryotic/mitochondrial release factor family. Methylated by PrmC. Methylation increases the termination efficiency of RF1.

Its subcellular location is the cytoplasm. In terms of biological role, peptide chain release factor 1 directs the termination of translation in response to the peptide chain termination codons UAG and UAA. In Psychromonas ingrahamii (strain DSM 17664 / CCUG 51855 / 37), this protein is Peptide chain release factor 1.